The sequence spans 695 residues: Nucleoprotein (695 aa).

Coiled coils occupy residues 316 to 341 (VNVG…RRHE) and 372 to 399 (QTLA…VEDQ). Disordered stretches follow at residues 424 to 458 (QARP…SFVD) and 483 to 615 (TSRE…AREA). The segment covering 438-447 (VDDKIEHEST) has biased composition (basic and acidic residues). 2 stretches are compositionally biased toward polar residues: residues 494–505 (PGQSQDLDNSQG) and 537–552 (TTDS…SDNE). The PTAP/PSAP motif signature appears at 603-606 (PSAP).

Belongs to the filoviruses nucleoprotein family. Homooligomer. Homomultimerizes to form the nucleocapsid. Binds to viral genomic RNA. Interacts with VP35 and VP30 to form the nucleocapsid. Also interacts with VP24 and VP40. Post-translationally, phosphorylated.

The protein localises to the virion. It is found in the host cytoplasm. In terms of biological role, encapsidates the genome, protecting it from nucleases. The encapsidated genomic RNA is termed the nucleocapsid and serves as template for transcription and replication. During replication, encapsidation by NP is coupled to RNA synthesis and all replicative products are resistant to nucleases. This Lake Victoria marburgvirus (strain Ozolin-75) (MARV) protein is Nucleoprotein (NP).